Here is a 237-residue protein sequence, read N- to C-terminus: Concanavalin-A (237 aa).

Mn(2+)-binding residues include glutamate 8 and aspartate 10. Aspartate 10, tyrosine 12, asparagine 14, and aspartate 19 together coordinate Ca(2+). An a carbohydrate-binding site is contributed by asparagine 14. The Mn(2+) site is built by aspartate 19 and histidine 24. Residues glycine 98 to tyrosine 100, aspartate 208, and arginine 228 each bind a carbohydrate.

The protein belongs to the leguminous lectin family. Homotetramer. Post-translationally, concanavalin A-like lectins of the Diocleinae subtribe undergo proteolytic processing referred to as circular permutation. The propeptide is split into an N-terminal and a C-terminal part, the gamma and beta chain, respectively. These are then religated in beta-gamma order to form the mature alpha chain. The beta and gamma chains can often be detected in cell extracts. Residues 1-118 of the mature chain, as displayed here, probably constitute the beta chain in the propeptide, residues 119-237 the gamma chain.

In terms of biological role, glucose/D-mannose specific lectin. In Canavalia cathartica (Jackbean), this protein is Concanavalin-A.